The following is a 356-amino-acid chain: Protein disulfide isomerase crld-1 (356 aa).

The first 17 residues, 1 to 17 (MSRILLLLAVLIGATSQ), serve as a signal peptide directing secretion. Over 18-299 (KEVTIKNEKC…DRPFMPIDQQ (282 aa)) the chain is Lumenal. The CXXC signature appears at 27 to 30 (CRTC). Residues cysteine 27 and cysteine 30 are joined by a disulfide bond. N-linked (GlcNAc...) asparagine glycosylation occurs at asparagine 122. One can recognise an EGF-like 1 domain in the interval 150 to 188 (GLSEKADVCFGKGSCHGDGSREGSGKCKCETGYTGNLCR). 5 cysteine pairs are disulfide-bonded: cysteine 158–cysteine 176, cysteine 178–cysteine 187, cysteine 245–cysteine 258, cysteine 251–cysteine 267, and cysteine 269–cysteine 281. Residues 241–282 (DVNECQNESACTKEHEICVNTVGSFKCECKEGYKKDDEQNCQ) form the EGF-like 2; calcium-binding domain. Residue asparagine 247 is glycosylated (N-linked (GlcNAc...) asparagine). A helical transmembrane segment spans residues 300-317 (LKLIAFSSLIIIITFVVW). Residues 318-321 (HGSP) are Cytoplasmic-facing. The helical transmembrane segment at 322–341 (VLYVLTGITIVALILVDLYV) threads the bilayer. Over 342–356 (NPDTIPDEAKRFLGY) the chain is Lumenal.

The protein belongs to the CRELD family. As to quaternary structure, interacts with unc-29. Isoforms a: Widely expressed in tissues including body wall muscles, neurons, pharynx, hypodermis, seam cells, intestine and gonad. Isoform b: Widely expressed in tissues including body wall muscles, neurons, pharynx, hypodermis, seam cells, intestine and gonad.

The protein localises to the endoplasmic reticulum membrane. It is found in the endoplasmic reticulum lumen. The enzyme catalyses Catalyzes the rearrangement of -S-S- bonds in proteins.. Its function is as follows. Protein disulfide isomerase which associates with the unc-29 subunit of levamisole-sensitive nicotinic acetylcholine receptors (L-nAChR) to promote L-nAChR assembly in the endoplasmic reticulum at neuromuscular junctions. Functionally, promotes L-nAChR assembly in the endoplasmic reticulum at neuromuscular junctions. The sequence is that of Protein disulfide isomerase crld-1 from Caenorhabditis elegans.